A 34-amino-acid chain; its full sequence is Photosystem II reaction center protein Y (34 aa).

Residues 1–4 lie on the Lumenal side of the membrane; that stretch reads MDIR. Residues 5–23 traverse the membrane as a helical segment; sequence LLIVLLPVLAAASWALYNI. Topologically, residues 24–34 are stromal; that stretch reads GRVALQQFRSM.

The protein belongs to the PsbY family. As to quaternary structure, PSII is composed of 1 copy each of membrane proteins PsbA, PsbB, PsbC, PsbD, PsbE, PsbF, PsbH, PsbI, PsbJ, PsbK, PsbL, PsbM, PsbT, PsbX, PsbY, PsbZ, Psb30/Ycf12, at least 3 peripheral proteins of the oxygen-evolving complex and a large number of cofactors. It forms dimeric complexes.

The protein resides in the plastid. Its subcellular location is the chloroplast thylakoid membrane. Loosely associated component of the core of photosystem II (PSII), it is not always seen in crystals. PSII is a light-driven water plastoquinone oxidoreductase, using light energy to abstract electrons from H(2)O, generating a proton gradient subsequently used for ATP formation. This Gracilaria tenuistipitata var. liui (Red alga) protein is Photosystem II reaction center protein Y.